We begin with the raw amino-acid sequence, 718 residues long: Polyribonucleotide nucleotidyltransferase (718 aa).

Mg(2+) is bound by residues Asp-496 and Asp-502. Residues 563 to 622 (PRLLTIKIDPDMIGLVIGPGGKTIKGITEETGAKIDIEDDGTVTISAVDENKAKRARNIV) form the KH domain. The region spanning 632–700 (GDVYAGRVTR…NKGRINLTRL (69 aa)) is the S1 motif domain.

As to quaternary structure, may form homodimers or higher order multimers. Interacts with RNase E (rne). Mg(2+) is required as a cofactor.

The protein localises to the cytoplasm. It catalyses the reaction RNA(n+1) + phosphate = RNA(n) + a ribonucleoside 5'-diphosphate. In terms of biological role, involved in mRNA degradation. Catalyzes the phosphorolysis of single-stranded polyribonucleotides processively in the 3'- to 5'-direction. In Nostoc sp. (strain PCC 7120 / SAG 25.82 / UTEX 2576), this protein is Polyribonucleotide nucleotidyltransferase.